The sequence spans 389 residues: Phospho-N-acetylmuramoyl-pentapeptide-transferase (389 aa).

The next 10 helical transmembrane spans lie at 25-45 (RAVM…PWVI), 73-93 (TMGG…WGDL), 97-117 (FIWI…VDDY), 135-155 (FWQS…VSEA), 190-210 (ISYP…IVGA), 222-242 (GLVI…AYVM), 258-278 (GAGE…AFLW), 286-306 (VFMG…VAVI), 311-331 (IVLF…MLQV), and 366-386 (QVVV…LTTL).

This sequence belongs to the glycosyltransferase 4 family. MraY subfamily. The cofactor is Mg(2+).

The protein resides in the cell inner membrane. It catalyses the reaction UDP-N-acetyl-alpha-D-muramoyl-L-alanyl-gamma-D-glutamyl-meso-2,6-diaminopimeloyl-D-alanyl-D-alanine + di-trans,octa-cis-undecaprenyl phosphate = di-trans,octa-cis-undecaprenyl diphospho-N-acetyl-alpha-D-muramoyl-L-alanyl-D-glutamyl-meso-2,6-diaminopimeloyl-D-alanyl-D-alanine + UMP. Its pathway is cell wall biogenesis; peptidoglycan biosynthesis. In terms of biological role, catalyzes the initial step of the lipid cycle reactions in the biosynthesis of the cell wall peptidoglycan: transfers peptidoglycan precursor phospho-MurNAc-pentapeptide from UDP-MurNAc-pentapeptide onto the lipid carrier undecaprenyl phosphate, yielding undecaprenyl-pyrophosphoryl-MurNAc-pentapeptide, known as lipid I. The polypeptide is Phospho-N-acetylmuramoyl-pentapeptide-transferase (Burkholderia cenocepacia (strain HI2424)).